Consider the following 257-residue polypeptide: Thiazole synthase (257 aa).

Lys96 acts as the Schiff-base intermediate with DXP in catalysis. Residues Gly157, 184–185, and 206–207 each bind 1-deoxy-D-xylulose 5-phosphate; these read AG and NT.

It belongs to the ThiG family. Homotetramer. Forms heterodimers with either ThiH or ThiS.

The protein resides in the cytoplasm. It catalyses the reaction [ThiS sulfur-carrier protein]-C-terminal-Gly-aminoethanethioate + 2-iminoacetate + 1-deoxy-D-xylulose 5-phosphate = [ThiS sulfur-carrier protein]-C-terminal Gly-Gly + 2-[(2R,5Z)-2-carboxy-4-methylthiazol-5(2H)-ylidene]ethyl phosphate + 2 H2O + H(+). The protein operates within cofactor biosynthesis; thiamine diphosphate biosynthesis. Functionally, catalyzes the rearrangement of 1-deoxy-D-xylulose 5-phosphate (DXP) to produce the thiazole phosphate moiety of thiamine. Sulfur is provided by the thiocarboxylate moiety of the carrier protein ThiS. In vitro, sulfur can be provided by H(2)S. In Bartonella bacilliformis (strain ATCC 35685 / KC583 / Herrer 020/F12,63), this protein is Thiazole synthase.